Here is a 135-residue protein sequence, read N- to C-terminus: ATP synthase epsilon chain (135 aa).

Belongs to the ATPase epsilon chain family. In terms of assembly, F-type ATPases have 2 components, CF(1) - the catalytic core - and CF(0) - the membrane proton channel. CF(1) has five subunits: alpha(3), beta(3), gamma(1), delta(1), epsilon(1). CF(0) has three main subunits: a, b and c.

The protein localises to the cell inner membrane. Its function is as follows. Produces ATP from ADP in the presence of a proton gradient across the membrane. This is ATP synthase epsilon chain from Rhizobium rhizogenes (strain K84 / ATCC BAA-868) (Agrobacterium radiobacter).